A 485-amino-acid polypeptide reads, in one-letter code: Arginine biosynthesis bifunctional protein ArgJ, mitochondrial (485 aa).

Positions 185, 214, 225, and 315 each coordinate substrate. Catalysis depends on threonine 225, which acts as the Nucleophile.

It belongs to the ArgJ family. Heterodimer of an alpha and a beta chain. Post-translationally, the alpha and beta chains are autoproteolytically processed from a single precursor protein within the mitochondrion.

The protein localises to the mitochondrion matrix. The enzyme catalyses N(2)-acetyl-L-ornithine + L-glutamate = N-acetyl-L-glutamate + L-ornithine. It carries out the reaction L-glutamate + acetyl-CoA = N-acetyl-L-glutamate + CoA + H(+). Its pathway is amino-acid biosynthesis; L-arginine biosynthesis; L-ornithine and N-acetyl-L-glutamate from L-glutamate and N(2)-acetyl-L-ornithine (cyclic): step 1/1. It functions in the pathway amino-acid biosynthesis; L-arginine biosynthesis; N(2)-acetyl-L-ornithine from L-glutamate: step 1/4. In terms of biological role, catalyzes two activities which are involved in the cyclic version of arginine biosynthesis: the synthesis of acetylglutamate from glutamate and acetyl-CoA, and of ornithine by transacetylation between acetylornithine and glutamate. This is Arginine biosynthesis bifunctional protein ArgJ, mitochondrial from Penicillium rubens (strain ATCC 28089 / DSM 1075 / NRRL 1951 / Wisconsin 54-1255) (Penicillium chrysogenum).